Reading from the N-terminus, the 173-residue chain is Alkyl hydroperoxide reductase AhpD (173 aa).

The active-site Proton donor is the C131. C131 and C134 are oxidised to a cystine. Residue C134 is the Cysteine sulfenic acid (-SOH) intermediate of the active site.

The protein belongs to the AhpD family.

It catalyses the reaction N(6)-[(R)-dihydrolipoyl]-L-lysyl-[lipoyl-carrier protein] + a hydroperoxide = N(6)-[(R)-lipoyl]-L-lysyl-[lipoyl-carrier protein] + an alcohol + H2O. Functionally, antioxidant protein with alkyl hydroperoxidase activity. Required for the reduction of the AhpC active site cysteine residues and for the regeneration of the AhpC enzyme activity. This chain is Alkyl hydroperoxide reductase AhpD, found in Rhizorhabdus wittichii (strain DSM 6014 / CCUG 31198 / JCM 15750 / NBRC 105917 / EY 4224 / RW1) (Sphingomonas wittichii).